The sequence spans 364 residues: 3-isopropylmalate dehydrogenase (364 aa).

Residue 78 to 89 participates in NAD(+) binding; it reads GPKWGTGAVRPE. Substrate is bound by residues Arg96, Arg106, Arg135, and Asp224. Asp224, Asp249, and Asp253 together coordinate Mg(2+). An NAD(+)-binding site is contributed by 288–299; sequence GSAPDLPANKVN.

This sequence belongs to the isocitrate and isopropylmalate dehydrogenases family. Homodimer. The cofactor is Mg(2+). Mn(2+) is required as a cofactor.

The protein localises to the cytoplasm. It carries out the reaction (2R,3S)-3-isopropylmalate + NAD(+) = 4-methyl-2-oxopentanoate + CO2 + NADH. Its pathway is amino-acid biosynthesis; L-leucine biosynthesis; L-leucine from 3-methyl-2-oxobutanoate: step 3/4. Its function is as follows. Catalyzes the oxidation of 3-carboxy-2-hydroxy-4-methylpentanoate (3-isopropylmalate) to 3-carboxy-4-methyl-2-oxopentanoate. The product decarboxylates to 4-methyl-2 oxopentanoate. This Wickerhamomyces anomalus (strain ATCC 8168 / CBS 5759 / DSM 6766 / JCM 3585 / IAM 12210 / NCYC 432 / NBRC 10213 / NRRL Y-366 / AJ 5027) (Yeast) protein is 3-isopropylmalate dehydrogenase (LEU2).